A 393-amino-acid chain; its full sequence is S-adenosylmethionine synthase 1 (393 aa).

Glutamate 9 is a binding site for Mg(2+). Histidine 15 is an ATP binding site. Glutamate 43 lines the K(+) pocket. L-methionine-binding residues include glutamate 56 and glutamine 99. Residues 167–169 (DGK), 235–238 (SGRF), aspartate 246, 252–253 (RK), alanine 269, lysine 273, and lysine 277 each bind ATP. Aspartate 246 contributes to the L-methionine binding site. Residue lysine 277 participates in L-methionine binding.

The protein belongs to the AdoMet synthase family. Homotetramer. The cofactor is Mn(2+). Mg(2+) serves as cofactor. Co(2+) is required as a cofactor. Requires K(+) as cofactor. It depends on NH4(+) as a cofactor. As to expression, mostly expressed in roots, and, to a lower extent, in hypocotyls and cotyledons.

It localises to the cytoplasm. The catalysed reaction is L-methionine + ATP + H2O = S-adenosyl-L-methionine + phosphate + diphosphate. The protein operates within amino-acid biosynthesis; S-adenosyl-L-methionine biosynthesis; S-adenosyl-L-methionine from L-methionine: step 1/1. Its activity is regulated as follows. Inhibited by products of SAMS reaction (SAM, Pi, PPi), substrate analogs (cycloleucine and ethionine), and alternative nucleotides (GTP, CTP and ADP). Strongly repressed by PPPi. Functionally, catalyzes the formation of S-adenosylmethionine from methionine and ATP. The reaction comprises two steps that are both catalyzed by the same enzyme: formation of S-adenosylmethionine (AdoMet) and triphosphate, and subsequent hydrolysis of the triphosphate. In Catharanthus roseus (Madagascar periwinkle), this protein is S-adenosylmethionine synthase 1 (SAMS1).